Consider the following 94-residue polypeptide: DNA-binding protein HU (94 aa).

Residues 56 to 94 (QKGKEGKVPGSDKTYKTEDKRVPKFKPGKTLKQKVEEGK) form a disordered region. Residues 68-77 (KTYKTEDKRV) show a composition bias toward basic and acidic residues. Basic residues predominate over residues 78–87 (PKFKPGKTLK).

Belongs to the bacterial histone-like protein family. In terms of assembly, homodimer.

In terms of biological role, histone-like DNA-binding protein which is capable of wrapping DNA to stabilize it, and thus to prevent its denaturation under extreme environmental conditions. The chain is DNA-binding protein HU (hup) from Helicobacter pylori (strain ATCC 700392 / 26695) (Campylobacter pylori).